Here is a 432-residue protein sequence, read N- to C-terminus: Competence protein ComFA (432 aa).

Residues Cys40, Cys43, Cys60, and Cys63 each coordinate Zn(2+). The Helicase ATP-binding domain occupies 107–257 (LQAVDKQKPT…RLGELKRLNL (151 aa)). Residue 120 to 127 (AVTGAGKT) participates in ATP binding. The DEAD box signature appears at 205-208 (DEVD). One can recognise a Helicase C-terminal domain in the interval 289-432 (KLKSYIEKQR…IQMMNKEAGL (144 aa)).

It belongs to the DEAD box helicase family. Monomer and dimer in solution. Interacts with DprA and ComFC; ComFA-ComFC form rings about 150 Angstroms in diameter with apparent 6-fold symmetry. Zn(2+) serves as cofactor.

It localises to the cytoplasm. In terms of biological role, involved in transformation (genetic competence for DNA uptake). DNA uptake is energy dependent, this protein may provide the driving force for DNA uptake. Does not have helicase activity, translocates on single-stranded (ss)DNA in a 5'-3' direction in an ATP-dependent manner, but does not unwind double-stranded (ds)DNA (tested with 5'- and 3'-overhang dsDNA). ATP hydrolysis causes the release of ssDNA from ComFA. A ssDNA-stimulated ATPase; dsDNA does not stimulate ATPase. ATP hydrolysis causes the release of ssDNA from ComFA. ComFC has no effect on ATPase activity. Binds ssDNA but only very poorly to dsDNA in the absence of ATP. Binding to ssDNA does not require free DNA ends. The sequence is that of Competence protein ComFA from Streptococcus pneumoniae (strain ATCC BAA-255 / R6).